Here is a 260-residue protein sequence, read N- to C-terminus: Ribonuclease 3 (260 aa).

Residues 1–24 form a disordered region; the sequence is MAQSSKYQRKPRSGERKRSQRRLE. Residues 12–24 show a composition bias toward basic and acidic residues; the sequence is RSGERKRSQRRLE. The region spanning 33 to 162 is the RNase III domain; the sequence is FDDLLVRTGL…FIGALYMDQG (130 aa). Glutamate 75 contributes to the Mg(2+) binding site. Residue aspartate 79 is part of the active site. Mg(2+) is bound by residues aspartate 148 and glutamate 151. Glutamate 151 is an active-site residue. A DRBM domain is found at 188–257; sequence DFKSQLQEFV…AKQALLALNQ (70 aa).

The protein belongs to the ribonuclease III family. In terms of assembly, homodimer. Mg(2+) is required as a cofactor.

It is found in the cytoplasm. The enzyme catalyses Endonucleolytic cleavage to 5'-phosphomonoester.. In terms of biological role, digests double-stranded RNA. Involved in the processing of primary rRNA transcript to yield the immediate precursors to the large and small rRNAs (23S and 16S). Processes some mRNAs, and tRNAs when they are encoded in the rRNA operon. Processes pre-crRNA and tracrRNA of type II CRISPR loci if present in the organism. The protein is Ribonuclease 3 of Shouchella clausii (strain KSM-K16) (Alkalihalobacillus clausii).